Here is a 750-residue protein sequence, read N- to C-terminus: Probable methylmalonyl-CoA mutase large subunit (750 aa).

(R)-methylmalonyl-CoA is bound by residues Tyr-91, Met-94, Thr-101, Arg-103, Tyr-105, and Ser-130. Cob(II)alamin contacts are provided by Phe-133 and Ala-155. (R)-methylmalonyl-CoA is bound by residues Thr-211 and Gln-213. Cob(II)alamin is bound by residues Val-222 and Arg-223. Residues Arg-223, His-260, Arg-299, and Ser-301 each coordinate (R)-methylmalonyl-CoA. Cob(II)alamin is bound by residues Gly-349, Glu-386, Ala-389, Gly-628, His-629, Asp-630, Arg-631, Ser-674, Leu-676, Gly-705, and Thr-728. In terms of domain architecture, B12-binding spans 616-748 (RPRILIAKMG…HRLAERLGYT (133 aa)).

The protein belongs to the methylmalonyl-CoA mutase family. Heterodimer of an alpha and a beta chain. Adenosylcob(III)alamin serves as cofactor.

The enzyme catalyses (R)-methylmalonyl-CoA = succinyl-CoA. It functions in the pathway metabolic intermediate metabolism; propanoyl-CoA degradation; succinyl-CoA from propanoyl-CoA: step 3/3. Functionally, catalyzes the isomerization of succinyl-CoA to methylmalonyl-CoA during synthesis of propionate from tricarboxylic acid-cycle intermediates. This Mycobacterium bovis (strain ATCC BAA-935 / AF2122/97) protein is Probable methylmalonyl-CoA mutase large subunit (mutB).